A 210-amino-acid chain; its full sequence is Cytochrome c oxidase subunit 2 (210 aa).

The Mitochondrial intermembrane segment spans residues 1-15; that stretch reads MSFILTFWMIFLMDS. A helical transmembrane segment spans residues 16-36; the sequence is IIVLISFSIFLSVWICALIIA. At 37-63 the chain is on the mitochondrial matrix side; that stretch reads TVLTVTKINNIYCTWDFISSKFIDTYW. Residues 64–84 form a helical membrane-spanning segment; that stretch reads FVLGMMFILCLLLRLCLLLYF. The Mitochondrial intermembrane segment spans residues 85 to 210; it reads SCINFVSFDL…GFMPIVINFI (126 aa). 6 residues coordinate Cu cation: H157, C192, E194, C196, H200, and M203. E194 serves as a coordination point for Mg(2+).

It belongs to the cytochrome c oxidase subunit 2 family. In terms of assembly, component of the cytochrome c oxidase (complex IV, CIV), a multisubunit enzyme composed of a catalytic core of 3 subunits and several supernumerary subunits. The complex exists as a monomer or a dimer and forms supercomplexes (SCs) in the inner mitochondrial membrane with ubiquinol-cytochrome c oxidoreductase (cytochrome b-c1 complex, complex III, CIII). Requires Cu cation as cofactor.

The protein localises to the mitochondrion inner membrane. The catalysed reaction is 4 Fe(II)-[cytochrome c] + O2 + 8 H(+)(in) = 4 Fe(III)-[cytochrome c] + 2 H2O + 4 H(+)(out). In terms of biological role, component of the cytochrome c oxidase, the last enzyme in the mitochondrial electron transport chain which drives oxidative phosphorylation. The respiratory chain contains 3 multisubunit complexes succinate dehydrogenase (complex II, CII), ubiquinol-cytochrome c oxidoreductase (cytochrome b-c1 complex, complex III, CIII) and cytochrome c oxidase (complex IV, CIV), that cooperate to transfer electrons derived from NADH and succinate to molecular oxygen, creating an electrochemical gradient over the inner membrane that drives transmembrane transport and the ATP synthase. Cytochrome c oxidase is the component of the respiratory chain that catalyzes the reduction of oxygen to water. Electrons originating from reduced cytochrome c in the intermembrane space (IMS) are transferred via the dinuclear copper A center (CU(A)) of subunit 2 and heme A of subunit 1 to the active site in subunit 1, a binuclear center (BNC) formed by heme A3 and copper B (CU(B)). The BNC reduces molecular oxygen to 2 water molecules using 4 electrons from cytochrome c in the IMS and 4 protons from the mitochondrial matrix. The sequence is that of Cytochrome c oxidase subunit 2 (COXII) from Trypanosoma brucei brucei.